The primary structure comprises 169 residues: ATP synthase subunit b, sodium ion specific (169 aa).

A helical membrane pass occupies residues 5–27 (SFISLDWGVVFQIVNTIVMYLIL).

This sequence belongs to the ATPase B chain family. As to quaternary structure, F-type ATPases have 2 components, F(1) - the catalytic core - and F(0) - the membrane proton channel. F(1) has five subunits: alpha(3), beta(3), gamma(1), delta(1), epsilon(1). F(0) has three main subunits: a(1), b(2) and c(10-14). The alpha and beta chains form an alternating ring which encloses part of the gamma chain. F(1) is attached to F(0) by a central stalk formed by the gamma and epsilon chains, while a peripheral stalk is formed by the delta and b chains.

The protein resides in the cell membrane. In terms of biological role, f(1)F(0) ATP synthase produces ATP from ADP in the presence of a proton or sodium gradient. F-type ATPases consist of two structural domains, F(1) containing the extramembraneous catalytic core and F(0) containing the membrane proton channel, linked together by a central stalk and a peripheral stalk. During catalysis, ATP synthesis in the catalytic domain of F(1) is coupled via a rotary mechanism of the central stalk subunits to proton translocation. Component of the F(0) channel, it forms part of the peripheral stalk, linking F(1) to F(0). Its function is as follows. In this organism this enzyme may function as an ATP-driven Na(+) ion pump to generate a Na(+) ion electrochemical gradient rather than as an ATP synthase. The chain is ATP synthase subunit b, sodium ion specific (atpF) from Clostridium paradoxum.